We begin with the raw amino-acid sequence, 473 residues long: BPI fold-containing family B member 3 (473 aa).

The first 20 residues, 1 to 20 (MMPGVYALLLLWGLATPCLG), serve as a signal peptide directing secretion. N-linked (GlcNAc...) asparagine glycosylation is present at N139. The cysteines at positions 161 and 196 are disulfide-linked.

It belongs to the BPI/LBP/Plunc superfamily. BPI/LBP family. In terms of tissue distribution, highly expressed in olfactory mucosa but undetectable in thymus, kidney, lung, brain, spleen and liver.

Its subcellular location is the secreted. Its function is as follows. May have the capacity to recognize and bind specific classes of odorants. May act as a carrier molecule, transporting odorants across the mucus layer to access receptor sites. May serve as a primary defense mechanism by recognizing and removing potentially harmful odorants or pathogenic microorganisms from the mucosa or clearing excess odorant from mucus to enable new odorant stimuli to be received. This is BPI fold-containing family B member 3 from Rattus norvegicus (Rat).